The chain runs to 324 residues: Clavaminate synthase 1 (324 aa).

Residues H144, E146, and H279 each coordinate Fe cation. Residue R293 coordinates 2-oxoglutarate.

The protein belongs to the clavaminate synthase family. Requires Fe(2+) as cofactor.

It carries out the reaction deoxyamidinoproclavaminate + 2-oxoglutarate + O2 = amidinoproclavaminate + succinate + CO2. It catalyses the reaction proclavaminate + 2-oxoglutarate + O2 = dihydroclavaminate + succinate + CO2 + H2O. The enzyme catalyses dihydroclavaminate + 2-oxoglutarate + O2 = clavaminate + succinate + CO2 + H2O. Its pathway is antibiotic biosynthesis; clavulanate biosynthesis; clavulanate from D-glyceraldehyde 3-phosphate and L-arginine: step 3/8. The protein operates within antibiotic biosynthesis; clavulanate biosynthesis; clavulanate from D-glyceraldehyde 3-phosphate and L-arginine: step 5/8. It participates in antibiotic biosynthesis; clavulanate biosynthesis; clavulanate from D-glyceraldehyde 3-phosphate and L-arginine: step 6/8. This chain is Clavaminate synthase 1 (cs1), found in Streptomyces clavuligerus.